Here is a 444-residue protein sequence, read N- to C-terminus: Bifunctional protein GlmU (444 aa).

The interval 1–226 (MTDSTHRTTA…EAELAGVNSR (226 aa)) is pyrophosphorylase. UDP-N-acetyl-alpha-D-glucosamine is bound by residues 13–16 (LAAG), Lys27, Gln75, and 80–81 (GT). Position 103 (Asp103) interacts with Mg(2+). 4 residues coordinate UDP-N-acetyl-alpha-D-glucosamine: Gly139, Glu153, Asn168, and Asn224. Asn224 is a binding site for Mg(2+). Residues 227–247 (SELARAEATLQTRLRNAAMDA) form a linker region. An N-acetyltransferase region spans residues 248–444 (GVTLVAPETV…QSLKARKEQG (197 aa)). Residues Arg313 and Lys331 each coordinate UDP-N-acetyl-alpha-D-glucosamine. His343 functions as the Proton acceptor in the catalytic mechanism. Tyr346 and Asn357 together coordinate UDP-N-acetyl-alpha-D-glucosamine. Residues Ala360, 366–367 (NY), Ser385, Ala403, and Arg420 contribute to the acetyl-CoA site.

It in the N-terminal section; belongs to the N-acetylglucosamine-1-phosphate uridyltransferase family. This sequence in the C-terminal section; belongs to the transferase hexapeptide repeat family. As to quaternary structure, homotrimer. Requires Mg(2+) as cofactor.

It is found in the cytoplasm. The enzyme catalyses alpha-D-glucosamine 1-phosphate + acetyl-CoA = N-acetyl-alpha-D-glucosamine 1-phosphate + CoA + H(+). It carries out the reaction N-acetyl-alpha-D-glucosamine 1-phosphate + UTP + H(+) = UDP-N-acetyl-alpha-D-glucosamine + diphosphate. The protein operates within nucleotide-sugar biosynthesis; UDP-N-acetyl-alpha-D-glucosamine biosynthesis; N-acetyl-alpha-D-glucosamine 1-phosphate from alpha-D-glucosamine 6-phosphate (route II): step 2/2. Its pathway is nucleotide-sugar biosynthesis; UDP-N-acetyl-alpha-D-glucosamine biosynthesis; UDP-N-acetyl-alpha-D-glucosamine from N-acetyl-alpha-D-glucosamine 1-phosphate: step 1/1. It participates in bacterial outer membrane biogenesis; LPS lipid A biosynthesis. Functionally, catalyzes the last two sequential reactions in the de novo biosynthetic pathway for UDP-N-acetylglucosamine (UDP-GlcNAc). The C-terminal domain catalyzes the transfer of acetyl group from acetyl coenzyme A to glucosamine-1-phosphate (GlcN-1-P) to produce N-acetylglucosamine-1-phosphate (GlcNAc-1-P), which is converted into UDP-GlcNAc by the transfer of uridine 5-monophosphate (from uridine 5-triphosphate), a reaction catalyzed by the N-terminal domain. This chain is Bifunctional protein GlmU, found in Gluconobacter oxydans (strain 621H) (Gluconobacter suboxydans).